Reading from the N-terminus, the 876-residue chain is Leucine--tRNA ligase (876 aa).

The 'HIGH' region motif lies at 43-53 (PYPSGRIHMGH). Positions 632 to 636 (KMSKS) match the 'KMSKS' region motif. Position 635 (lysine 635) interacts with ATP.

Belongs to the class-I aminoacyl-tRNA synthetase family.

The protein resides in the cytoplasm. The catalysed reaction is tRNA(Leu) + L-leucine + ATP = L-leucyl-tRNA(Leu) + AMP + diphosphate. In Rhodopseudomonas palustris (strain ATCC BAA-98 / CGA009), this protein is Leucine--tRNA ligase.